The following is a 60-amino-acid chain: Large ribosomal subunit protein uL30 (60 aa).

Belongs to the universal ribosomal protein uL30 family. In terms of assembly, part of the 50S ribosomal subunit.

This chain is Large ribosomal subunit protein uL30, found in Desulforapulum autotrophicum (strain ATCC 43914 / DSM 3382 / VKM B-1955 / HRM2) (Desulfobacterium autotrophicum).